A 751-amino-acid polypeptide reads, in one-letter code: Ribosomal RNA large subunit methyltransferase K/L (751 aa).

Residues Leu-44–Leu-155 form the THUMP domain.

This sequence belongs to the methyltransferase superfamily. RlmKL family.

It is found in the cytoplasm. It catalyses the reaction guanosine(2445) in 23S rRNA + S-adenosyl-L-methionine = N(2)-methylguanosine(2445) in 23S rRNA + S-adenosyl-L-homocysteine + H(+). The catalysed reaction is guanosine(2069) in 23S rRNA + S-adenosyl-L-methionine = N(2)-methylguanosine(2069) in 23S rRNA + S-adenosyl-L-homocysteine + H(+). Specifically methylates the guanine in position 2445 (m2G2445) and the guanine in position 2069 (m7G2069) of 23S rRNA. The chain is Ribosomal RNA large subunit methyltransferase K/L from Cellvibrio japonicus (strain Ueda107) (Pseudomonas fluorescens subsp. cellulosa).